We begin with the raw amino-acid sequence, 335 residues long: MSIQASPVTILGAGSYGTALAIALSRNGYPTYLWGHNPTACAQMAQERQNARFLPDISFPEALRVESDLKSAVEKSKDLLIVVPSHVFGEVIQQIKPFLHNRHRIIWATKGLERGTGRLLQNLVEQELGSQYPLAVLSGPTFAKELAAGLPTAITLAAENEQFAKEFQARIHCSKHFRVYINNDMVGVQLGGAIKNVIAISAGMSDGMGFGANARTALITRGIAEISRLGVSLGANVNTFMGMSGLGDLVLTCTDNQSRNRRFGMMLGQGVDARTAMDEIGQVVEGYYNTKEAYMLAQKQGIEMPITEQIYQVLFCGKDAKEAATALLGRKSKVE.

Residues Ser-15, Tyr-16, His-36, and Lys-110 each coordinate NADPH. Sn-glycerol 3-phosphate is bound by residues Lys-110, Gly-139, and Thr-141. Ala-143 lines the NADPH pocket. The sn-glycerol 3-phosphate site is built by Lys-195, Asp-248, Ser-258, Arg-259, and Asn-260. The active-site Proton acceptor is the Lys-195. Arg-259 contributes to the NADPH binding site. NADPH is bound by residues Val-283 and Glu-285.

It belongs to the NAD-dependent glycerol-3-phosphate dehydrogenase family.

It localises to the cytoplasm. The catalysed reaction is sn-glycerol 3-phosphate + NAD(+) = dihydroxyacetone phosphate + NADH + H(+). The enzyme catalyses sn-glycerol 3-phosphate + NADP(+) = dihydroxyacetone phosphate + NADPH + H(+). It participates in membrane lipid metabolism; glycerophospholipid metabolism. Its function is as follows. Catalyzes the reduction of the glycolytic intermediate dihydroxyacetone phosphate (DHAP) to sn-glycerol 3-phosphate (G3P), the key precursor for phospholipid synthesis. The chain is Glycerol-3-phosphate dehydrogenase [NAD(P)+] from Mannheimia succiniciproducens (strain KCTC 0769BP / MBEL55E).